The primary structure comprises 122 residues: Large ribosomal subunit protein uL14 (122 aa).

Belongs to the universal ribosomal protein uL14 family. As to quaternary structure, part of the 50S ribosomal subunit. Forms a cluster with proteins L3 and L19. In the 70S ribosome, L14 and L19 interact and together make contacts with the 16S rRNA in bridges B5 and B8.

Functionally, binds to 23S rRNA. Forms part of two intersubunit bridges in the 70S ribosome. The chain is Large ribosomal subunit protein uL14 from Flavobacterium psychrophilum (strain ATCC 49511 / DSM 21280 / CIP 103535 / JIP02/86).